Consider the following 245-residue polypeptide: Dehydrogenase/reductase SDR family member 6 (245 aa).

NAD(+) contacts are provided by residues 16–18 (QGI), D37, and D58. A substrate-binding site is contributed by R144. Y147 acts as the Proton acceptor in catalysis. NAD(+)-binding positions include K151 and 180–184 (VDTPS). Substrate is bound by residues R188 and R205.

It belongs to the short-chain dehydrogenases/reductases (SDR) family. In terms of assembly, homotetramer. Detected in liver (at protein level).

The protein localises to the cytoplasm. The catalysed reaction is cis-4-hydroxy-L-proline + NAD(+) = 4-oxo-L-proline + NADH + H(+). The enzyme catalyses (R)-3-hydroxybutanoate + NAD(+) = acetoacetate + NADH + H(+). The protein operates within amino-acid metabolism. It participates in siderophore biosynthesis. NAD(H)-dependent dehydrogenase/reductase with a preference for cyclic substrates. Catalyzes stereoselective conversion of 4-oxo-L-proline to cis-4-hydroxy-L-proline, likely a detoxification mechanism for ketoprolines. Mediates the formation of 2,5-dihydroxybenzoate (2,5-DHBA), a siderophore that chelates free cytoplasmic iron and associates with LCN2, thereby regulating iron transport and homeostasis while protecting cells against free radical-induced oxidative stress. The iron-siderophore complex is imported into mitochondria, providing an iron source for mitochondrial metabolic processes in particular heme synthesis. May act as a 3-hydroxybutyrate dehydrogenase. This Homo sapiens (Human) protein is Dehydrogenase/reductase SDR family member 6.